The primary structure comprises 53 residues: uncharacterized protein (53 aa).

This is an uncharacterized protein from Dictyostelium discoideum (Social amoeba).